We begin with the raw amino-acid sequence, 564 residues long: Proline--tRNA ligase (564 aa).

This sequence belongs to the class-II aminoacyl-tRNA synthetase family. ProS type 1 subfamily. In terms of assembly, homodimer.

It is found in the cytoplasm. The catalysed reaction is tRNA(Pro) + L-proline + ATP = L-prolyl-tRNA(Pro) + AMP + diphosphate. In terms of biological role, catalyzes the attachment of proline to tRNA(Pro) in a two-step reaction: proline is first activated by ATP to form Pro-AMP and then transferred to the acceptor end of tRNA(Pro). As ProRS can inadvertently accommodate and process non-cognate amino acids such as alanine and cysteine, to avoid such errors it has two additional distinct editing activities against alanine. One activity is designated as 'pretransfer' editing and involves the tRNA(Pro)-independent hydrolysis of activated Ala-AMP. The other activity is designated 'posttransfer' editing and involves deacylation of mischarged Ala-tRNA(Pro). The misacylated Cys-tRNA(Pro) is not edited by ProRS. The polypeptide is Proline--tRNA ligase (Xylella fastidiosa (strain 9a5c)).